Consider the following 1502-residue polypeptide: MLSNENLNSEEIIRELCACNGLSFEKIRQDGPATTTLEMFFSGYPKMAGLSYFPNLTQLILVGQNIHCIAGLESCHFLKELWITECHLSKIQGLHHCADLQKLYLYHNEISVIEGLENLLKLEVLWLNNNQINVIEGLDMMQNLKELNLANNLIHSIGESLDPNVQLERLNLSGNKISSFKELTNLARLPSLMDLGLKDPQYSPNPVCLLCNYAIHVLYHIPQLQRLDTYDVSEKQIKNLAESTVVKKIMYYNMRMKNNQRQQREELEKVRERTSKAKQVPENRIRALSFLVKNLEHELTDMKSSGNMQANIPISNKFHENNCDTEESNSQQSSERRKNNSDRLEQIHKKICALKERMIFWTRKLSEVEKHHEEKCRRMKDSFHLLDQFLQTELETVGNVRFEEGTAADSWFKSCYDLIVSRFCAMNFRAYGISGIKIHRIVRVHNRILRLKFEDKVQYWMDNEDLYTTESYKKKLEYLFYIFDPKLPIDKKELLHVLENGCNITRSSQLPEQEQVEAVLLTNSMSLCEGPRLEFLQKQAMNKSCDPEAFKDGIIVIAKVFLGRSVKARDDLPIKPNNYAKVNSVYRLQKFANSTFNSLNDEICSSKEHGNCDCSLRQCEWLVFDHEFILPEYVVEFEYISMEKSSGFVTPSNENAEDVSHDLKLDEDAIALEPFLKPKPKIISLDEKTVLSVARANIYSQITVLNLHGNSLSKLKDISRLNGLRKLIISFNEFSSLEDVSYLTNLEYLDASHNQVITLEGFKGLGKLKYLDLSWNKLTNSREDLHILRKHAIQLSSLDIRYNFWQKPASVLKDTIAILPSLTHLNGVTITEDEISEALQISSGSRITQASLLINARTDTVKPRCLNLLPSAQILAQFSKNCLDPNAELSNSWYTKITSLTLDSQNLVRITNLEKLVNLRWASFSSNHLTKIEGLEHCVNLEELNLDDNSISKLEGLSKLTKLRRLSINNNLLAGFDRHVIESLSHLHFLSAENNNISSLAGLQRGYKLIELYLSNNCISSNQEIYSLKGLNNLVILDMWGNPILLKHENYRLFVIFHLSAIKALDGVAVEPSECENAKDMFGGRLTSDMIAERIGHQRFTELQDLNWRTSSIRSIDLVPADHFRNVQTVNLENNNLTSFSGLIFLPNIKNLYLNHNRIESILPQQKSQSHLTNRQILHQKVSSSGYGQQGTSKGSRDTVYGEALSPVMQSLEVLHLGYNGINSLPMLQLGRLRNLKSLYLQGNEISHVEGLENLQFLRELVLDHNRIKAIAETSFAKLNSLVSLNLEENRLRDLNNLPPLLKLRKLLIGSNKIQEISEIEKLEVIPALVELSISGNPISRKPFLRNLLVVRLQNLQILDGILITAEDRARAEMYFMEQQSLTVPNAVMDLGNPVSTMIVSKPLPLRVTNFPLAGGAHHSLGADLHFNNGHEDIFQNEANKYKKLKNYTVGVGHNPQNTQDIALRQLRGGTHFPASYLTQQSGQARSQQKHPFNQENEGRCV.

LRR repeat units lie at residues 53 to 79, 97 to 119, 120 to 141, 142 to 164, 166 to 188, 224 to 247, 296 to 320, 699 to 721, 722 to 744, 746 to 764, 765 to 790, 792 to 814, 822 to 849, 894 to 916, 917 to 938, 939 to 960, 961 to 983, 985 to 1009, 1011 to 1030, 1031 to 1053, 1100 to 1123, 1124 to 1146, 1147 to 1170, 1209 to 1232, 1234 to 1255, 1256 to 1278, 1280 to 1301, 1302 to 1325, and 1327 to 1351; these read FPNL…HFLK, CADL…LENL, LKLE…LDMM, QNLK…LDPN, QLER…NLAR, LQRL…TVVK, EHEL…KFHE, YSQI…ISRL, NGLR…SYLT, LEYL…GFKG, LGKL…ILRK, AIQL…VLKD, LTHL…RITQ, YTKI…LEKL, VNLR…LEHC, VNLE…LSKL, TKLR…VIES, SHLH…GYKL, ELYL…SLKG, LNNL…NYRL, FTEL…PADH, FRNV…LIFL, PNIK…KSQS, MQSL…QLGR, RNLK…LENL, QFLR…SFAK, NSLV…LPPL, LKLR…KLEV, and PALV…LLVV. Residues 317–342 form a disordered region; that stretch reads KFHENNCDTEESNSQQSSERRKNNSD. Polar residues predominate over residues 1479–1496; sequence TQQSGQARSQQKHPFNQE. The interval 1479-1502 is disordered; it reads TQQSGQARSQQKHPFNQENEGRCV.

The protein is Leucine-rich repeat-containing protein 9 (lrrc9) of Xenopus tropicalis (Western clawed frog).